Here is a 244-residue protein sequence, read N- to C-terminus: Isoprenyl transferase (244 aa).

Aspartate 23 is a catalytic residue. Residue aspartate 23 participates in Mg(2+) binding. Residues 24 to 27 (GNGR), tryptophan 28, arginine 36, histidine 40, and 68 to 70 (STE) contribute to the substrate site. The active-site Proton acceptor is the asparagine 71. Substrate-binding positions include tryptophan 72, arginine 74, arginine 191, and 197 to 199 (RMS). A Mg(2+)-binding site is contributed by glutamate 210.

The protein belongs to the UPP synthase family. Homodimer. The cofactor is Mg(2+).

Its function is as follows. Catalyzes the condensation of isopentenyl diphosphate (IPP) with allylic pyrophosphates generating different type of terpenoids. The chain is Isoprenyl transferase from Lactococcus lactis subsp. lactis (strain IL1403) (Streptococcus lactis).